Consider the following 456-residue polypeptide: Bifunctional protein GlmU (456 aa).

The segment at 1–229 (MLNSAMSVVI…ISETDGVNNR (229 aa)) is pyrophosphorylase. UDP-N-acetyl-alpha-D-glucosamine contacts are provided by residues 11 to 14 (LAAG), lysine 25, glutamine 76, 81 to 82 (GT), 103 to 105 (YGD), glycine 140, glutamate 154, asparagine 169, and asparagine 227. Aspartate 105 lines the Mg(2+) pocket. Residue asparagine 227 participates in Mg(2+) binding. The segment at 230–250 (LQLSRLERIYQAEQAEKLLLS) is linker. The N-acetyltransferase stretch occupies residues 251–456 (GVMLRDPARF…QGWQRPVKKK (206 aa)). UDP-N-acetyl-alpha-D-glucosamine contacts are provided by arginine 333 and lysine 351. Histidine 363 functions as the Proton acceptor in the catalytic mechanism. The UDP-N-acetyl-alpha-D-glucosamine site is built by tyrosine 366 and asparagine 377. Residues alanine 380, 386-387 (NY), serine 405, alanine 423, and arginine 440 contribute to the acetyl-CoA site.

This sequence in the N-terminal section; belongs to the N-acetylglucosamine-1-phosphate uridyltransferase family. In the C-terminal section; belongs to the transferase hexapeptide repeat family. As to quaternary structure, homotrimer. Mg(2+) serves as cofactor.

It localises to the cytoplasm. It carries out the reaction alpha-D-glucosamine 1-phosphate + acetyl-CoA = N-acetyl-alpha-D-glucosamine 1-phosphate + CoA + H(+). The catalysed reaction is N-acetyl-alpha-D-glucosamine 1-phosphate + UTP + H(+) = UDP-N-acetyl-alpha-D-glucosamine + diphosphate. It functions in the pathway nucleotide-sugar biosynthesis; UDP-N-acetyl-alpha-D-glucosamine biosynthesis; N-acetyl-alpha-D-glucosamine 1-phosphate from alpha-D-glucosamine 6-phosphate (route II): step 2/2. Its pathway is nucleotide-sugar biosynthesis; UDP-N-acetyl-alpha-D-glucosamine biosynthesis; UDP-N-acetyl-alpha-D-glucosamine from N-acetyl-alpha-D-glucosamine 1-phosphate: step 1/1. It participates in bacterial outer membrane biogenesis; LPS lipid A biosynthesis. Its function is as follows. Catalyzes the last two sequential reactions in the de novo biosynthetic pathway for UDP-N-acetylglucosamine (UDP-GlcNAc). The C-terminal domain catalyzes the transfer of acetyl group from acetyl coenzyme A to glucosamine-1-phosphate (GlcN-1-P) to produce N-acetylglucosamine-1-phosphate (GlcNAc-1-P), which is converted into UDP-GlcNAc by the transfer of uridine 5-monophosphate (from uridine 5-triphosphate), a reaction catalyzed by the N-terminal domain. The protein is Bifunctional protein GlmU of Salmonella choleraesuis (strain SC-B67).